The sequence spans 337 residues: Casein kinase II subunit alpha (337 aa).

The Protein kinase domain maps to 47–332; sequence YEIIRKIGRG…TREAMEHPYF (286 aa). Residues 53-61 and K76 contribute to the ATP site; that span reads IGRGKYSEV. D164 (proton acceptor) is an active-site residue.

The protein belongs to the protein kinase superfamily. CMGC Ser/Thr protein kinase family. CK2 subfamily. In terms of assembly, tetramer of two alpha and two beta chains.

The catalysed reaction is L-seryl-[protein] + ATP = O-phospho-L-seryl-[protein] + ADP + H(+). It carries out the reaction L-threonyl-[protein] + ATP = O-phospho-L-threonyl-[protein] + ADP + H(+). Casein kinases are operationally defined by their preferential utilization of acidic proteins such as caseins as substrates. The alpha chain contains the catalytic site. This is Casein kinase II subunit alpha (casK) from Dictyostelium discoideum (Social amoeba).